Reading from the N-terminus, the 610-residue chain is Glutamine--fructose-6-phosphate aminotransferase [isomerizing] (610 aa).

The Nucleophile; for GATase activity role is filled by cysteine 2. The Glutamine amidotransferase type-2 domain maps to 2–219 (CGIVGAVAQR…EGDVAEITRR (218 aa)). SIS domains lie at 287 to 427 (ADEL…LRGM) and 459 to 600 (LAEG…VDQP). The active-site For Fru-6P isomerization activity is lysine 605.

In terms of assembly, homodimer.

It localises to the cytoplasm. It carries out the reaction D-fructose 6-phosphate + L-glutamine = D-glucosamine 6-phosphate + L-glutamate. Its function is as follows. Catalyzes the first step in hexosamine metabolism, converting fructose-6P into glucosamine-6P using glutamine as a nitrogen source. The sequence is that of Glutamine--fructose-6-phosphate aminotransferase [isomerizing] from Pectobacterium atrosepticum (strain SCRI 1043 / ATCC BAA-672) (Erwinia carotovora subsp. atroseptica).